The chain runs to 80 residues: MPKRILQGTVTSDKNEQTVTVLVERRFKHPLLKKTVRLSKKYRAHDPENQFKVGDIVRIEECAPISKTKRWKVVTDAVVA.

This sequence belongs to the universal ribosomal protein uS17 family. Part of the 30S ribosomal subunit.

In terms of biological role, one of the primary rRNA binding proteins, it binds specifically to the 5'-end of 16S ribosomal RNA. The chain is Small ribosomal subunit protein uS17 from Cereibacter sphaeroides (strain ATCC 17029 / ATH 2.4.9) (Rhodobacter sphaeroides).